Reading from the N-terminus, the 100-residue chain is Small ribosomal subunit protein bS20 (100 aa).

The segment covering 1–20 (MASGKPKKKNPRLASGRKRV) has biased composition (basic residues). Positions 1–21 (MASGKPKKKNPRLASGRKRVR) are disordered.

It belongs to the bacterial ribosomal protein bS20 family.

Its function is as follows. Binds directly to 16S ribosomal RNA. This Albidiferax ferrireducens (strain ATCC BAA-621 / DSM 15236 / T118) (Rhodoferax ferrireducens) protein is Small ribosomal subunit protein bS20.